The primary structure comprises 441 residues: Phenylalanine-4-hydroxylase (441 aa).

One can recognise an ACT domain in the interval 23–102 (FSISKGSDKI…KATTLQESSN (80 aa)). The Fe cation site is built by His273, His278, and Glu318.

This sequence belongs to the biopterin-dependent aromatic amino acid hydroxylase family. In terms of assembly, homotetramer. Fe(2+) serves as cofactor.

It catalyses the reaction (6R)-L-erythro-5,6,7,8-tetrahydrobiopterin + L-phenylalanine + O2 = (4aS,6R)-4a-hydroxy-L-erythro-5,6,7,8-tetrahydrobiopterin + L-tyrosine. The enzyme catalyses (6R)-L-erythro-5,6,7,8-tetrahydrobiopterin + L-tryptophan + O2 = 5-hydroxy-L-tryptophan + (4aS,6R)-4a-hydroxy-L-erythro-5,6,7,8-tetrahydrobiopterin. It participates in amino-acid degradation; L-phenylalanine degradation; acetoacetate and fumarate from L-phenylalanine: step 1/6. Its function is as follows. Catalyzes the hydroxylation of L-phenylalanine. Hydroxylates L-tryptophan to 5-hydroxy-L-tryptophan but does not hydroxylate L-tyrosine to L-DOPA. It uses D-threo-tetrahydrodictyopterin (DH4), also known as dictyoperin, as a cofactor. The protein is Phenylalanine-4-hydroxylase (pah) of Dictyostelium discoideum (Social amoeba).